A 408-amino-acid polypeptide reads, in one-letter code: L-lactate oxidase (408 aa).

In terms of domain architecture, FMN hydroxy acid dehydrogenase spans 14 to 370 (NEAIKMVNVD…KHADIRQINY (357 aa)). Tyr40 provides a ligand contact to pyruvate. FMN-binding positions include 93–95 (PIA), Ser122, and Gln144. Pyruvate is bound at residue Tyr146. Thr172 contacts FMN. Arg181 contributes to the pyruvate binding site. Residues Lys241 and Ser263 each coordinate FMN. Pyruvate-binding residues include His265 and Arg268. Catalysis depends on His265, which acts as the Proton acceptor. Residues 296-300 (DSGVR) and Arg320 contribute to the FMN site.

Belongs to the FMN-dependent alpha-hydroxy acid dehydrogenase family. Homotetramer. It depends on FMN as a cofactor.

The catalysed reaction is a (2S)-2-hydroxycarboxylate + O2 = a 2-oxocarboxylate + H2O2. It carries out the reaction (S)-lactate + O2 = pyruvate + H2O2. The enzyme catalyses 2-hydroxyoctanoate + O2 = 2-oxooctanoate + H2O2. It catalyses the reaction glycolate + O2 = glyoxylate + H2O2. The catalysed reaction is mandelate + O2 = phenylglyoxylate + H2O2. It carries out the reaction 2-hydroxyoctadecanoate + O2 = 2-oxooctadecanoate + H2O2. Oxidase that catalyzes the oxidation of a broad range of 2-hydroxyacids in vitro, such as (S)-lactate, 2-hydroxyoctanoate, and to a lesser extent glycolate, mandelate and 2-hydroxyoctadecanoate, to the corresponding 2-oxoacids, with a reduction of O2 to H2O2. May be involved in the utilization of L-lactate as an energy source for growth. This chain is L-lactate oxidase, found in Lactobacillus jensenii.